We begin with the raw amino-acid sequence, 125 residues long: Holo-[acyl-carrier-protein] synthase (125 aa).

Aspartate 8 and glutamate 57 together coordinate Mg(2+).

The protein belongs to the P-Pant transferase superfamily. AcpS family. Mg(2+) serves as cofactor.

The protein localises to the cytoplasm. The catalysed reaction is apo-[ACP] + CoA = holo-[ACP] + adenosine 3',5'-bisphosphate + H(+). In terms of biological role, transfers the 4'-phosphopantetheine moiety from coenzyme A to a Ser of acyl-carrier-protein. The polypeptide is Holo-[acyl-carrier-protein] synthase (Dechloromonas aromatica (strain RCB)).